The following is a 166-amino-acid chain: Large ribosomal subunit protein uL10 (166 aa).

The protein belongs to the universal ribosomal protein uL10 family. Part of the ribosomal stalk of the 50S ribosomal subunit. The N-terminus interacts with L11 and the large rRNA to form the base of the stalk. The C-terminus forms an elongated spine to which L12 dimers bind in a sequential fashion forming a multimeric L10(L12)X complex.

In terms of biological role, forms part of the ribosomal stalk, playing a central role in the interaction of the ribosome with GTP-bound translation factors. The chain is Large ribosomal subunit protein uL10 from Limosilactobacillus reuteri (strain DSM 20016) (Lactobacillus reuteri).